A 926-amino-acid chain; its full sequence is DNA mismatch repair protein MutS (926 aa).

Positions 1–67 are disordered; it reads MAASPNPLQG…NPNQINDLDQ (67 aa). Composition is skewed to polar residues over residues 18–44 and 57–67; these read QSTTNGGKETNNSIGSSENLSNQQLKS and KNPNQINDLDQ. 726–733 contacts ATP; that stretch reads GPNASGKS.

Belongs to the DNA mismatch repair MutS family.

Its function is as follows. This protein is involved in the repair of mismatches in DNA. It is possible that it carries out the mismatch recognition step. This protein has a weak ATPase activity. This is DNA mismatch repair protein MutS from Prochlorococcus marinus (strain NATL1A).